Here is a 219-residue protein sequence, read N- to C-terminus: Proteasome subunit beta type-9 (219 aa).

Residues Met1 to Gly20 constitute a propeptide, removed in mature form. The Nucleophile role is filled by Thr21. N6-acetyllysine occurs at positions 53 and 109.

Belongs to the peptidase T1B family. In terms of assembly, the 26S proteasome consists of a 20S proteasome core and two 19S regulatory subunits. The 20S proteasome core is composed of 28 subunits that are arranged in four stacked rings, resulting in a barrel-shaped structure. The two end rings are each formed by seven alpha subunits, and the two central rings are each formed by seven beta subunits. The catalytic chamber with the active sites is on the inside of the barrel. Component of the immunoproteasome, where it displaces the equivalent housekeeping subunit PSMB6. Component of the spermatoproteasome, a form of the proteasome specifically found in testis. As to quaternary structure, (Microbial infection) Interacts with HIV-1 TAT protein. Post-translationally, autocleaved. The resulting N-terminal Thr residue of the mature subunit is responsible for the nucleophile proteolytic activity.

Its subcellular location is the cytoplasm. It is found in the nucleus. The enzyme catalyses Cleavage of peptide bonds with very broad specificity.. Functionally, the proteasome is a multicatalytic proteinase complex which is characterized by its ability to cleave peptides with Arg, Phe, Tyr, Leu, and Glu adjacent to the leaving group at neutral or slightly basic pH. The proteasome has an ATP-dependent proteolytic activity. This subunit is involved in antigen processing to generate class I binding peptides. Replacement of PSMB6 by PSMB9 increases the capacity of the immunoproteasome to cleave model peptides after hydrophobic and basic residues. This chain is Proteasome subunit beta type-9 (PSMB9), found in Homo sapiens (Human).